Reading from the N-terminus, the 158-residue chain is uncharacterized protein (158 aa).

The interval 77–132 (AIKRNKIGGSKRSEVHSNRSKNYSSKKFRSQKCRRSRQKKRQNKKPNNSRFISSNK) is disordered. The segment covering 100-120 (SSKKFRSQKCRRSRQKKRQNK) has biased composition (basic residues).

This is an uncharacterized protein from Acanthamoeba polyphaga mimivirus (APMV).